The primary structure comprises 353 residues: Ferredoxin--NADP reductase 1 (353 aa).

Residues threonine 14, aspartate 33, glutamine 41, tyrosine 46, alanine 86, phenylalanine 121, aspartate 289, and threonine 330 each coordinate FAD.

It belongs to the ferredoxin--NADP reductase type 2 family. As to quaternary structure, homodimer. The cofactor is FAD.

It catalyses the reaction 2 reduced [2Fe-2S]-[ferredoxin] + NADP(+) + H(+) = 2 oxidized [2Fe-2S]-[ferredoxin] + NADPH. This is Ferredoxin--NADP reductase 1 from Christiangramia forsetii (strain DSM 17595 / CGMCC 1.15422 / KT0803) (Gramella forsetii).